Consider the following 180-residue polypeptide: Large ribosomal subunit protein uL5 (180 aa).

The protein belongs to the universal ribosomal protein uL5 family. Part of the 50S ribosomal subunit; part of the 5S rRNA/L5/L18/L25 subcomplex. Contacts the 5S rRNA and the P site tRNA. Forms a bridge to the 30S subunit in the 70S ribosome.

Its function is as follows. This is one of the proteins that bind and probably mediate the attachment of the 5S RNA into the large ribosomal subunit, where it forms part of the central protuberance. In the 70S ribosome it contacts protein S13 of the 30S subunit (bridge B1b), connecting the 2 subunits; this bridge is implicated in subunit movement. Contacts the P site tRNA; the 5S rRNA and some of its associated proteins might help stabilize positioning of ribosome-bound tRNAs. The protein is Large ribosomal subunit protein uL5 of Rubrobacter xylanophilus (strain DSM 9941 / JCM 11954 / NBRC 16129 / PRD-1).